A 657-amino-acid chain; its full sequence is Methyl-accepting chemotaxis protein CtpL (657 aa).

Topologically, residues 1 to 5 (MRLKQ) are cytoplasmic. The helical transmembrane segment at 6 to 26 (LTNLNTLLLLTVCLALGITLW) threads the bilayer. Residues 27-305 (WSQRAMERPF…ERQRLQGQVR (279 aa)) are Periplasmic-facing. A helical transmembrane segment spans residues 306–326 (LIQGGMIALILLIALAIDSLQ). The region spanning 327-380 (RRLARVLGQLVPALSAWADGDFSRPISLRTRTEDLRNLEDSLNRLRSFLAELVG) is the HAMP domain. The Cytoplasmic portion of the chain corresponds to 327-657 (RRLARVLGQL…LRTTVQAFRL (331 aa)). The 237-residue stretch at 385 to 621 (RAEQVAGSSQ…EIRSHSERIH (237 aa)) folds into the Methyl-accepting transducer domain.

This sequence belongs to the methyl-accepting chemotaxis (MCP) protein family.

Its subcellular location is the cell inner membrane. Chemotactic-signal transducers respond to changes in the concentration of attractants and repellents in the environment, transduce a signal from the outside to the inside of the cell, and facilitate sensory adaptation through the variation of the level of methylation. Chemoreceptor for inorganic phosphate, which is required for taxis at low concentrations of phosphate. Is also responsible for the positive chemotaxis toward 4-chloroaniline (4CA) and catechol. Does not recognize inorganic phosphate directly, but via a complex between the periplasmic protein PstS and inorganic phosphate. In Pseudomonas aeruginosa (strain ATCC 15692 / DSM 22644 / CIP 104116 / JCM 14847 / LMG 12228 / 1C / PRS 101 / PAO1), this protein is Methyl-accepting chemotaxis protein CtpL.